The sequence spans 72 residues: UPF0270 protein Ent638_3781 (72 aa).

This sequence belongs to the UPF0270 family.

The sequence is that of UPF0270 protein Ent638_3781 from Enterobacter sp. (strain 638).